The following is a 283-amino-acid chain: Zinc import ATP-binding protein ZnuC (283 aa).

Residues V13–R228 enclose the ABC transporter domain. G45–S52 provides a ligand contact to ATP. The tract at residues H264–G283 is disordered. Over residues G272 to G283 the composition is skewed to gly residues.

This sequence belongs to the ABC transporter superfamily. Zinc importer (TC 3.A.1.15.5) family. In terms of assembly, the complex is composed of two ATP-binding proteins (ZnuC), two transmembrane proteins (ZnuB) and a solute-binding protein (ZnuA).

The protein resides in the cell inner membrane. The catalysed reaction is Zn(2+)(out) + ATP(in) + H2O(in) = Zn(2+)(in) + ADP(in) + phosphate(in) + H(+)(in). Functionally, part of the ABC transporter complex ZnuABC involved in zinc import. Responsible for energy coupling to the transport system. This chain is Zinc import ATP-binding protein ZnuC, found in Chelativorans sp. (strain BNC1).